We begin with the raw amino-acid sequence, 258 residues long: Synapse differentiation-inducing gene protein 1-like (258 aa).

The Extracellular portion of the chain corresponds to 1-182 (MESLSELQNP…FIVIPPRDHL (182 aa)). Residues 183 to 203 (GLAIFSMLCCFWPLGIAAFYF) traverse the membrane as a helical segment. Over 204–228 (SQGTSKAVTKGDFPLASIASRRALF) the chain is Cytoplasmic. A helical membrane pass occupies residues 229–249 (LAALSITIGTGVYVGVVVALI). Topologically, residues 250–258 (AYLSKPGHI) are extracellular.

Belongs to the CD225/Dispanin family.

It is found in the membrane. Its subcellular location is the golgi apparatus. The protein localises to the cis-Golgi network. This chain is Synapse differentiation-inducing gene protein 1-like (syndig1l), found in Danio rerio (Zebrafish).